A 943-amino-acid chain; its full sequence is WD repeat-containing protein 3 (943 aa).

WD repeat units lie at residues 21-60, 63-102, 105-144, 147-186, and 189-228; these read SQKGNIVFVTLRGEKGRYVAVPACEHVFIWDLRKGEKILI, GLKQEVTCLCPSPDGLHLAVGYEDGSIRIFSLLSGEGNVT, GHKAAITTLKYDQLGGRLASGSKDTDIIVWDVINESGLYR, GHKDAITQALFLREKNLLVTSGKDTMVKWWDLDTQHCFKT, and GHRTEVWGLVLLSEEKRLITGASDSELRVWDIAYLQEIED. 2 positions are modified to phosphoserine: Ser240 and Ser241. Thr257 is modified (phosphothreonine). One copy of the WD 6 repeat lies at 277-316; it reads EGRDRVVNLAVDKTGRILACHGTDSVLELFCILSKKEIQK. The tract at residues 326 to 345 is disordered; it reads RKKAKLHSSKGEEEDPEVNV. WD repeat units lie at residues 413 to 451, 453 to 493, 494 to 533, 547 to 586, 589 to 630, 631 to 670, and 673 to 712; these read GHRSDVRTLSFSSDNIAVLSAAADSIKIWNRSTLQCIRT, TCEY…ETID, AHDGALWSMSLSPDQRGFVTGGADKSVKFWDFELVKDENS, QLDEDVLCVSYSPNQKLLAVSLLDCTVKIFYVDTLKFFLS, GHKL…KSLF, AHDDSVMYLQFVPKSHLFFTAGKDHKIKQWDADKFEHIQT, and GHHQEIWCLAVSPSGDYVVSSSHDKSLRLWERTREPLILE. Glycyl lysine isopeptide (Lys-Gly) (interchain with G-Cter in SUMO2) cross-links involve residues Lys474 and Lys529. Ser726 carries the post-translational modification Phosphoserine.

The protein belongs to the WD repeat WDR3/UTP12 family. As to quaternary structure, part of the small subunit (SSU) processome, composed of more than 70 proteins and the RNA chaperone small nucleolar RNA (snoRNA) U3. As to expression, ubiquitous.

The protein resides in the nucleus. It localises to the nucleolus. In terms of biological role, part of the small subunit (SSU) processome, first precursor of the small eukaryotic ribosomal subunit. During the assembly of the SSU processome in the nucleolus, many ribosome biogenesis factors, an RNA chaperone and ribosomal proteins associate with the nascent pre-rRNA and work in concert to generate RNA folding, modifications, rearrangements and cleavage as well as targeted degradation of pre-ribosomal RNA by the RNA exosome. This chain is WD repeat-containing protein 3, found in Homo sapiens (Human).